Reading from the N-terminus, the 401-residue chain is Serine--glyoxylate aminotransferase (401 aa).

N-acetylmethionine is present on Met-1. Pyridoxal 5'-phosphate is bound by residues 68–70 (TGT), Thr-148, and 200–201 (QK). Lys-201 contributes to the 3-hydroxypyruvate binding site. Lys-201 is subject to N6-(pyridoxal phosphate)lysine. At Ser-204 the chain carries Phosphoserine. Residue Arg-347 participates in 3-hydroxypyruvate binding. Positions 399–401 (SRI) match the Microbody targeting signal motif.

The protein belongs to the class-V pyridoxal-phosphate-dependent aminotransferase family. In terms of assembly, forms homodimers. Interacts with RABGAP22. Pyridoxal 5'-phosphate serves as cofactor. As to expression, widely expressed. Preferentially expressed in green, leafy tissues, root cortex and epidermis, developing siliques and dry seeds.

The protein localises to the peroxisome. The catalysed reaction is glyoxylate + L-serine = 3-hydroxypyruvate + glycine. It carries out the reaction glyoxylate + L-alanine = glycine + pyruvate. It catalyses the reaction L-serine + pyruvate = 3-hydroxypyruvate + L-alanine. The enzyme catalyses 3-hydroxypyruvate + L-asparagine = 2-oxosuccinamate + L-serine. The catalysed reaction is L-asparagine + glyoxylate = 2-oxosuccinamate + glycine. It carries out the reaction L-asparagine + pyruvate = 2-oxosuccinamate + L-alanine. Its activity is regulated as follows. Inhibited by aminooxyacetate and beta-chloro-L-alanine, but not by p-hydroxymercuribenzoate. Its function is as follows. Photorespiratory enzyme that catalyzes transamination reactions with multiple substrates, including asparagine. Functions exclusively as a catabolic enzyme in Asn metabolism. Involved in root development during seedling establishment after seed germination by regulating serine homeostasis and acetate conversion. This Arabidopsis thaliana (Mouse-ear cress) protein is Serine--glyoxylate aminotransferase.